The chain runs to 563 residues: Membrane protein insertase YidC (563 aa).

The helical transmembrane segment at 6 to 26 threads the bilayer; that stretch reads TILWMIFSFSLLLLWNNWQIH. The disordered stretch occupies residues 36–68; that stretch reads PPASSAASPAEGQQAAANGQAATPSVPTTPAAA. The next 4 helical transmembrane spans lie at 373 to 393, 443 to 463, 482 to 502, and 512 to 532; these read WGWAIVALTVIIKAVFFPLAA, LPMVVQIPVFIALYWVLLASV, PYFILPAVMMATMFLQIKLNP, and VMMIMPLVFGGMMFFFPAGLV.

The protein belongs to the OXA1/ALB3/YidC family. Type 1 subfamily. Interacts with the Sec translocase complex via SecD. Specifically interacts with transmembrane segments of nascent integral membrane proteins during membrane integration.

Its subcellular location is the cell inner membrane. In terms of biological role, required for the insertion and/or proper folding and/or complex formation of integral membrane proteins into the membrane. Involved in integration of membrane proteins that insert both dependently and independently of the Sec translocase complex, as well as at least some lipoproteins. Aids folding of multispanning membrane proteins. The sequence is that of Membrane protein insertase YidC from Bordetella petrii (strain ATCC BAA-461 / DSM 12804 / CCUG 43448).